Reading from the N-terminus, the 219-residue chain is Probable transcription factor At1g55950 (219 aa).

The disordered stretch occupies residues 9-77 (ASHSLKSLMA…DEKMETEEEG (69 aa)). Positions 17-30 (MAKKNKRSQQKNKC) are enriched in basic residues. A compositionally biased stretch (basic and acidic residues) spans 31 to 48 (LKPEKDPSTVKRLLEDPP). Residues 65–77 (YGDDEKMETEEEG) are compositionally biased toward acidic residues.

It belongs to the GeBP family.

The polypeptide is Probable transcription factor At1g55950 (Arabidopsis thaliana (Mouse-ear cress)).